The following is a 330-amino-acid chain: G-protein coupled receptor 3 (330 aa).

The Extracellular segment spans residues 1 to 42; it reads MMWGAGSSMAWFSAGSGSVNVSSVDPVEEPTGPATLLPSPRA. N-linked (GlcNAc...) asparagine glycosylation is present at Asn20. A helical transmembrane segment spans residues 43 to 62; that stretch reads WDVVLCISGTLVSCENALVV. The Cytoplasmic segment spans residues 63 to 74; that stretch reads AIIVGTPAFRAP. The helical transmembrane segment at 75–98 threads the bilayer; the sequence is MFLLVGSLAVADLLAGLGLVLHFA. The Extracellular segment spans residues 99–110; that stretch reads ADFCIGSPEMSL. The chain crosses the membrane as a helical span at residues 111–132; the sequence is MLVGVLAMAFTASIGSLLAITV. Residues 133–153 are Cytoplasmic-facing; it reads DRYLSLYNALTYYSETTVTRT. A helical membrane pass occupies residues 154–173; sequence YVMLALVWVGALGLGLVPVL. The Extracellular segment spans residues 174 to 198; it reads AWNCRDGLTTCGVVYPLSKNHLVVL. The chain crosses the membrane as a helical span at residues 199 to 217; the sequence is AIAFFMVFGIMLQLYAQIC. Residues 218-245 lie on the Cytoplasmic side of the membrane; the sequence is RIVCRHAQQIALQRHLLPASHYVATRKG. The helical transmembrane segment at 246 to 272 threads the bilayer; it reads IATLAVVLGAFAACWLPFTVYCLLGDA. Over 273–277 the chain is Extracellular; sequence DSPRL. Residues 278–299 traverse the membrane as a helical segment; that stretch reads YTYLTLLPATYNSMINPVIYAF. Residues 300–330 lie on the Cytoplasmic side of the membrane; that stretch reads RNQDVQKVLWAICCCCSTSKIPFRSRSPSDV. The S-palmitoyl cysteine moiety is linked to residue Cys313. 3 positions are modified to phosphoserine: Ser324, Ser326, and Ser328.

Belongs to the G-protein coupled receptor 1 family. Expressed in both the forebrain and hindbrain, with the highest level in habenula. Lower level expression in the testis. Expressed in several metabolically active peripheral tissues, although at lower levels than in the central nervous system (CNS).

The protein localises to the cell membrane. In terms of biological role, constitutively active G-protein coupled receptor that maintains high 3'-5'-cyclic adenosine monophosphate (cAMP) levels that a plays a role in serveral processes including meiotic arrest in oocytes or neuronal development via activation of numerous intracellular signaling pathways. Acts as an essential activator of thermogenic adipocytes and drives thermogenesis via its intrinsic G(s)-coupling activity without the requirement of a ligand. Has a potential role in modulating a number of brain functions, including behavioral responses to stress, amyloid-beta peptide generation in neurons. Stimulates neurite outgrowth in cerebellar granular neurons modulated via PKA, ERK, and most strongly PI3K-mediated signaling pathways. This chain is G-protein coupled receptor 3 (Gpr3), found in Mus musculus (Mouse).